Reading from the N-terminus, the 176-residue chain is Ribosome rescue factor SmrB (176 aa).

The 76-residue stretch at 98–173 (LDLHGLTQMQ…GTAAILLLVE (76 aa)) folds into the Smr domain.

It belongs to the SmrB family. In terms of assembly, associates with collided ribosomes, but not with correctly translating polysomes.

Functionally, acts as a ribosome collision sensor. Detects stalled/collided disomes (pairs of ribosomes where the leading ribosome is stalled and a second ribosome has collided with it) and endonucleolytically cleaves mRNA at the 5' boundary of the stalled ribosome. Stalled/collided disomes form a new interface (primarily via the 30S subunits) that binds SmrB. Cleaved mRNA becomes available for tmRNA ligation, leading to ribosomal subunit dissociation and rescue of stalled ribosomes. The chain is Ribosome rescue factor SmrB from Serratia proteamaculans (strain 568).